Here is a 199-residue protein sequence, read N- to C-terminus: MGEVVKDGREEVIQAWYMDDSEEDQRLPHHKDPKEFLSLDKLAELGVLSWRLDADNYETDEDLKKIRESRGYSYMDFCEVCPEKLPNYEVKVKSFFEEHLHTDEEIRYCVAGSGYFDVRDRNEAWIRVWVKKGGMIVLPAGIYHRFTVDSDNYIKAMRLFVGEPVWTPYNRPHDHLPARKEYIDNFVKVNEGGVIDASA.

Residues H99, H101, E105, and H144 each coordinate Fe(2+). Ni(2+) contacts are provided by H99, H101, E105, and H144.

The protein belongs to the acireductone dioxygenase (ARD) family. Requires Fe(2+) as cofactor. Ni(2+) is required as a cofactor.

Its subcellular location is the cytoplasm. It is found in the nucleus. It carries out the reaction 1,2-dihydroxy-5-(methylsulfanyl)pent-1-en-3-one + O2 = 4-methylsulfanyl-2-oxobutanoate + formate + 2 H(+). The catalysed reaction is 1,2-dihydroxy-5-(methylsulfanyl)pent-1-en-3-one + O2 = 3-(methylsulfanyl)propanoate + CO + formate + 2 H(+). Its pathway is amino-acid biosynthesis; L-methionine biosynthesis via salvage pathway; L-methionine from S-methyl-5-thio-alpha-D-ribose 1-phosphate: step 5/6. Functionally, catalyzes 2 different reactions between oxygen and the acireductone 1,2-dihydroxy-3-keto-5-methylthiopentene (DHK-MTPene) depending upon the metal bound in the active site. Fe-containing acireductone dioxygenase (Fe-ARD) produces formate and 2-keto-4-methylthiobutyrate (KMTB), the alpha-ketoacid precursor of methionine in the methionine recycle pathway. Ni-containing acireductone dioxygenase (Ni-ARD) produces methylthiopropionate, carbon monoxide and formate, and does not lie on the methionine recycle pathway. The chain is Acireductone dioxygenase 3 (ARD3) from Arabidopsis thaliana (Mouse-ear cress).